A 352-amino-acid chain; its full sequence is C-C chemokine receptor type 5 (352 aa).

Topologically, residues 1–30 (MDYQVSSPTYDIDYYTSEPCQKVNVKQIAA) are extracellular. Residue Tyr3 is modified to Sulfotyrosine. Ser6 and Ser7 each carry an O-linked (GalNAc...) serine glycan. Sulfotyrosine is present on residues Tyr10, Tyr14, and Tyr15. 2 cysteine pairs are disulfide-bonded: Cys20–Cys269 and Cys101–Cys178. The helical transmembrane segment at 31 to 58 (RLLPPLYSLVFIFGFVGNILVVLILINC) threads the bilayer. Residues 59–68 (KRLKSMTDIY) are Cytoplasmic-facing. Residues 69–89 (LLNLAISDLFFLLTVPFWAHY) traverse the membrane as a helical segment. The Extracellular portion of the chain corresponds to 90–102 (AAARWDFGNTMCQ). Residues 103–124 (LLTGLYFIGFFSGIFFIILLTI) traverse the membrane as a helical segment. At 125–141 (DRYLAIVHAVFALKART) the chain is on the cytoplasmic side. Residues 142 to 166 (VTFGVVTSVITWVVAVFASLPGIIF) form a helical membrane-spanning segment. Over 167-198 (TRSQREGLHYTCSSHFPYSQYQFWKNFQTLKI) the chain is Extracellular. Residues 199–218 (VILGLVLPLLVMVICYSGIL) form a helical membrane-spanning segment. The Cytoplasmic segment spans residues 219–235 (KTLLRCRNEKKRHRAVR). Residues 236–260 (LIFTIMIVYFLFWAPYNIVLLLNTF) traverse the membrane as a helical segment. The Extracellular segment spans residues 261–277 (QEFFGLNNCSSSNRLDQ). Residues 278–301 (AMQVTETLGMTHCCINPIIYAFVG) form a helical membrane-spanning segment. The Cytoplasmic portion of the chain corresponds to 302–352 (EKFRNYLLVFFQKHIAKRFCKCCSIFQQEAPERASSVYTRSTGEQEISVGL). 3 S-palmitoyl cysteine lipidation sites follow: Cys321, Cys323, and Cys324. Phosphoserine; by BARK1 occurs at positions 336, 337, 342, and 349.

This sequence belongs to the G-protein coupled receptor 1 family. In terms of assembly, interacts with PRAF2. Efficient ligand binding to CCL3/MIP-1alpha and CCL4/MIP-1beta requires sulfation, O-glycosylation and sialic acid modifications. Glycosylation on Ser-6 is required for efficient binding of CCL4. Interacts with GRK2. Interacts with ARRB1 and ARRB2. Interacts with CNIH4. Interacts with S100A4; this interaction stimulates T-lymphocyte chemotaxis. Post-translationally, sulfated on at least 2 of the N-terminal tyrosines. Sulfation is required for efficient binding of the chemokines, CCL3 and CCL4. Palmitoylation in the C-terminal is important for cell surface expression. In terms of processing, phosphorylation on serine residues in the C-terminal is stimulated by binding CC chemokines especially by APO-RANTES. Post-translationally, O-glycosylated, but not N-glycosylated. Ser-6 appears to be the major site even if Ser-7 may be also O-glycosylated. Also sialylated glycans present which contribute to chemokine binding. Thr-16 and Ser-17 may also be glycosylated and, if so, with small moieties such as a T-antigen.

The protein resides in the cell membrane. Its function is as follows. Receptor for a number of inflammatory CC-chemokines including CCL3/MIP-1-alpha, CCL4/MIP-1-beta and RANTES and subsequently transduces a signal by increasing the intracellular calcium ion level. May play a role in the control of granulocytic lineage proliferation or differentiation. Participates in T-lymphocyte migration to the infection site by acting as a chemotactic receptor. The chain is C-C chemokine receptor type 5 (CCR5) from Nasalis larvatus (Proboscis monkey).